The following is a 252-amino-acid chain: Low-density lipoprotein receptor-related protein 5-like protein (252 aa).

LDL-receptor class B repeat units follow at residues 3-45, 46-88, 89-132, 133-175, and 176-218; these read GHVY…NWVA, RSLY…HPEM, GLTY…DLQE, GKLY…LGDF, and IYWT…DKVV. The interval 223–247 is disordered; it reads HADRNGGAATCASSRPTQPGLAAPS.

This chain is Low-density lipoprotein receptor-related protein 5-like protein (LRP5L), found in Homo sapiens (Human).